Reading from the N-terminus, the 491-residue chain is Probable CtpA-like serine protease (491 aa).

The interval 1 to 22 (MSESKDTTEVNQEVNEKASSQS) is disordered. A compositionally biased stretch (polar residues) spans 9–22 (EVNQEVNEKASSQS). Residues 34 to 54 (FIIILIVTILVTAMIAVFATI) traverse the membrane as a helical segment. Positions 119–201 (TKSFNEDVSG…TKVTLTIERG (83 aa)) constitute a PDZ domain. Residues Ser-324, Asp-335, and Lys-349 each act as charge relay system in the active site.

Belongs to the peptidase S41A family.

The protein resides in the cell membrane. This Staphylococcus saprophyticus subsp. saprophyticus (strain ATCC 15305 / DSM 20229 / NCIMB 8711 / NCTC 7292 / S-41) protein is Probable CtpA-like serine protease.